The following is a 91-amino-acid chain: Insertion element IS1 7 protein InsA (91 aa).

It belongs to the IS1 elements InsA family.

In terms of biological role, absolutely required for transposition of IS1. The protein is Insertion element IS1 7 protein InsA (insA7) of Escherichia coli (strain K12).